Here is a 471-residue protein sequence, read N- to C-terminus: Abscission/NoCut checkpoint regulator (471 aa).

A disordered region spans residues 39–64 (GGAGQGREGRSWGEGPRGPGLGRRDL). The FYVE-type zinc-finger motif lies at 74–133 (ATMESRCYGCAVKFTLFKKEYGCKNCGRAFCSGCLSFSAAVPRTGNTQQKVCKQCHEVLT). Zn(2+)-binding residues include cysteine 80, cysteine 83, cysteine 96, cysteine 99, cysteine 104, cysteine 107, cysteine 125, and cysteine 128. Serine 144 carries the post-translational modification Phosphoserine. The short motif at 174–187 (DQMIAERLARLRQE) is the MIM1-A element. A Glycyl lysine isopeptide (Lys-Gly) (interchain with G-Cter in SUMO2) cross-link involves residue lysine 207. The residue at position 243 (threonine 243) is a Phosphothreonine. The segment at 271–299 (KGGGPAASLQNDLNQGGPGSTNSKRQANW) is disordered. The span at 278-299 (SLQNDLNQGGPGSTNSKRQANW) shows a compositional bias: polar residues. Phosphoserine occurs at positions 286 and 293. Residues 311 to 375 (EAALELREEN…RVLQQLTEEA (65 aa)) adopt a coiled-coil conformation. The MIM1-B motif lies at 326 to 339 (ILALAKRLAMLRGQ). Serine 354 is modified (phosphoserine). The segment at 386–412 (PAEQASRPWTQPRGAEPEAQDVDPRPE) is disordered. Serine 463 carries the phosphoserine modification.

Interacts (via MIM1-B) with VPS4A; interaction takes place at the midbody ring following cytokinesis checkpoint activation. Post-translationally, phosphorylated in vitro at Ser-22 by AURKB; however, phosphorylation at this site could not be confirmed in vivo. In terms of tissue distribution, detected in brain, heart, skeletal muscle and kidney. Expressed in the liver (at protein level).

The protein localises to the cytoplasm. It localises to the cytoskeleton. Its subcellular location is the microtubule organizing center. It is found in the centrosome. The protein resides in the cleavage furrow. The protein localises to the midbody. It localises to the midbody ring. Functionally, key regulator of abscission step in cytokinesis: part of the cytokinesis checkpoint, a process required to delay abscission to prevent both premature resolution of intercellular chromosome bridges and accumulation of DNA damage. Together with CHMP4C, required to retain abscission-competent VPS4 (VPS4A and/or VPS4B) at the midbody ring until abscission checkpoint signaling is terminated at late cytokinesis. Deactivation of AURKB results in dephosphorylation of CHMP4C followed by its dissociation from ZFYVE19/ANCHR and VPS4 and subsequent abscission. The protein is Abscission/NoCut checkpoint regulator (ZFYVE19) of Homo sapiens (Human).